The following is a 248-amino-acid chain: Leucyl/phenylalanyl-tRNA--protein transferase (248 aa).

This sequence belongs to the L/F-transferase family.

The protein localises to the cytoplasm. The enzyme catalyses N-terminal L-lysyl-[protein] + L-leucyl-tRNA(Leu) = N-terminal L-leucyl-L-lysyl-[protein] + tRNA(Leu) + H(+). The catalysed reaction is N-terminal L-arginyl-[protein] + L-leucyl-tRNA(Leu) = N-terminal L-leucyl-L-arginyl-[protein] + tRNA(Leu) + H(+). It carries out the reaction L-phenylalanyl-tRNA(Phe) + an N-terminal L-alpha-aminoacyl-[protein] = an N-terminal L-phenylalanyl-L-alpha-aminoacyl-[protein] + tRNA(Phe). Functionally, functions in the N-end rule pathway of protein degradation where it conjugates Leu, Phe and, less efficiently, Met from aminoacyl-tRNAs to the N-termini of proteins containing an N-terminal arginine or lysine. The chain is Leucyl/phenylalanyl-tRNA--protein transferase from Ralstonia pickettii (strain 12J).